Here is a 756-residue protein sequence, read N- to C-terminus: Polyribonucleotide nucleotidyltransferase (756 aa).

Asp-547 and Asp-553 together coordinate Mg(2+). One can recognise a KH domain in the interval 613–672 (PRITSVTIPVNKIGELIGPKGKTINAITEETGADVSIEEDGTVYISAATGEAADAAIDRV). The S1 motif domain occupies 684 to 753 (GERFLGTVVK…NRGKISLVPV (70 aa)).

Belongs to the polyribonucleotide nucleotidyltransferase family. Mg(2+) is required as a cofactor.

It localises to the cytoplasm. It carries out the reaction RNA(n+1) + phosphate = RNA(n) + a ribonucleoside 5'-diphosphate. Its function is as follows. Involved in mRNA degradation. Catalyzes the phosphorolysis of single-stranded polyribonucleotides processively in the 3'- to 5'-direction. The polypeptide is Polyribonucleotide nucleotidyltransferase (Corynebacterium aurimucosum (strain ATCC 700975 / DSM 44827 / CIP 107346 / CN-1) (Corynebacterium nigricans)).